The sequence spans 323 residues: Oligopeptide transport ATP-binding protein OppD (323 aa).

Residues Leu5–Met254 form the ABC transporter domain. Gly41 to Ser48 is a binding site for ATP.

Belongs to the ABC transporter superfamily. In terms of assembly, the complex is composed of two ATP-binding proteins (OppD and OppF), two transmembrane proteins (OppB and OppC) and a solute-binding protein (OppA or MppA).

The protein localises to the cell inner membrane. It carries out the reaction a [peptide](out) + ATP + H2O = a [peptide](in) + ADP + phosphate + H(+). Part of the ABC transporter complex OppABCDF involved in the uptake of oligopeptides. Probably responsible for energy coupling to the transport system. This chain is Oligopeptide transport ATP-binding protein OppD (oppD), found in Haemophilus influenzae (strain ATCC 51907 / DSM 11121 / KW20 / Rd).